Consider the following 353-residue polypeptide: Protein RecA (353 aa).

Residue 75–82 participates in ATP binding; it reads GPESSGKT.

Belongs to the RecA family.

It is found in the cytoplasm. Functionally, can catalyze the hydrolysis of ATP in the presence of single-stranded DNA, the ATP-dependent uptake of single-stranded DNA by duplex DNA, and the ATP-dependent hybridization of homologous single-stranded DNAs. It interacts with LexA causing its activation and leading to its autocatalytic cleavage. This Cupriavidus necator (Alcaligenes eutrophus) protein is Protein RecA.